We begin with the raw amino-acid sequence, 349 residues long: Protein AMBP (349 aa).

The first 19 residues, 1–19 (MQGLRTLFLLLTACLASRA), serve as a signal peptide directing secretion. Asn-33 carries N-linked (GlcNAc...) asparagine glycosylation. Residues Cys-52 and Lys-110 each coordinate 3-hydroxy-L-kynurenine. Residues Cys-90 and Cys-187 are joined by a disulfide bond. N-linked (GlcNAc...) asparagine glycosylation occurs at Asn-114. The 3-hydroxy-L-kynurenine site is built by Lys-136 and Lys-148. O-linked (Xyl...) (chondroitin sulfate) serine glycosylation is present at Ser-214. Disulfide bonds link Cys-230–Cys-280, Cys-239–Cys-263, Cys-255–Cys-276, Cys-286–Cys-336, Cys-295–Cys-319, and Cys-311–Cys-332. BPTI/Kunitz inhibitor domains lie at 230 to 280 (CQLN…LQTC) and 286 to 336 (CNLP…KEYC). Residue Asn-233 is glycosylated (N-linked (GlcNAc...) asparagine).

This sequence in the N-terminal section; belongs to the calycin superfamily. Lipocalin family. Monomer. Homodimer. In plasma, it occurs as a monomer or dimer and in covalently-linked complexes with immunoglobulin A (IgA), ALB/albumin and F2/prothrombin. Chromophore-bound alpha-1-microglobulin interacts with the constant region of immunoglobulin A. Chromophore-bound alpha-1-microglobulin interacts with ALB with molar ratio 2:1 and 1:1; this interaction does not prevent fatty acid binding to ALB. Interacts with F2/prothrombin (via N-terminus) with molar ratio 2:1 and 1:1; this interaction does not prevent the activation of prothrombin to thrombin. Interacts with NDUFAB1, a subunit of mitochondrial complex I. Interacts with FN1. As to quaternary structure, I-alpha-I plasma protease inhibitors are assembled from one or two heavy chains (HC) and one light chain, bikunin. Inter-alpha-inhibitor (I-alpha-I) is composed of ITIH1/HC1, ITIH2/HC2 and bikunin, and pre-alpha-inhibitor (P-alpha-I) of ITIH3/HC3 and bikunin. Interacts with TNFAIP6 (via Link domain). In terms of assembly, monomer. Also occurs as a complex with tryptase in mast cells. Post-translationally, the precursor is proteolytically processed into separately functioning proteins. 3-hydroxykynurenine, an oxidized tryptophan metabolite that is common in biological fluids, reacts with Cys-53, Lys-111, Lys-137, and Lys-149 to form heterogeneous polycyclic chromophores including hydroxanthommatin. The reaction by alpha-1-microglobulin is autocatalytic; the human protein forms chromophore even when expressed in insect and bacterial cells. The chromophore can react with accessible cysteines forming non-reducible thioether cross-links with other molecules of alpha-1-microglobulin or with other proteins such as Ig alpha-1 chain C region 'Cys-352'. In terms of processing, heavy chains are interlinked with bikunin via a chondroitin 4-sulfate bridge to the C-terminal aspartate. Post-translationally, proteolytically cleaved by PRSS3 at Kunitz domain 2. Expressed by the liver and secreted in plasma (at protein level).

It localises to the secreted. Its subcellular location is the endoplasmic reticulum. The protein resides in the cytoplasm. The protein localises to the cytosol. It is found in the cell membrane. It localises to the nucleus membrane. Its subcellular location is the mitochondrion inner membrane. The protein resides in the extracellular space. The protein localises to the extracellular matrix. In terms of biological role, antioxidant and tissue repair protein with reductase, heme-binding and radical-scavenging activities. Removes and protects against harmful oxidants and repairs macromolecules in intravascular and extravascular spaces and in intracellular compartments. Intravascularly, plays a regulatory role in red cell homeostasis by preventing heme- and reactive oxygen species-induced cell damage. Binds and degrades free heme to protect fetal and adult red blood cells from hemolysis. Reduces extracellular methemoglobin, a Fe3+ (ferric) form of hemoglobin that cannot bind oxygen, back to the Fe2+ (ferrous) form deoxyhemoglobin, which has oxygen-carrying potential. Upon acute inflammation, inhibits oxidation of low-density lipoprotein particles by MPO and limits vascular damage. Extravascularly, protects from oxidation products formed on extracellular matrix structures and cell membranes. Catalyzes the reduction of carbonyl groups on oxidized collagen fibers and preserves cellular and extracellular matrix ultrastructures. Importantly, counteracts the oxidative damage at blood-placenta interface, preventing leakage of free fetal hemoglobin into the maternal circulation. Intracellularly, has a role in maintaining mitochondrial redox homeostasis. Bound to complex I of the respiratory chain of mitochondria, may scavenge free radicals and preserve mitochondrial ATP synthesis. Protects renal tubule epithelial cells from heme-induced oxidative damage to mitochondria. Reduces cytochrome c from Fe3+ (ferric) to the Fe2+ (ferrous) state through formation of superoxide anion radicals in the presence of ascorbate or NADH/NADPH electron donor cofactors, ascorbate being the preferred cofactor. Has a chaperone role in facilitating the correct folding of bikunin in the endoplasmic reticulum compartment. Kunitz-type serine protease inhibitor and structural component of extracellular matrix with a role in extracellular space remodeling and cell adhesion. Among others, has antiprotease activity toward kallikrein, a protease involved in airway inflammation; inhibits GZMK/granzyme, a granule-stored serine protease involved in NK and T cell cytotoxic responses; and inhibits PLG/plasmin, a protease required for activation of matrix metalloproteinases. As part of I-alpha-I complex, provides for the heavy chains to be transferred from I-alpha-I complex to hyaluronan in the presence of TNFAIP6, in a dynamic process that releases free bikunin and remodels extracellular matrix proteoglycan structures. Free bikunin, but not its heavy chain-bound form, acts as a potent protease inhibitor in airway secretions. Part of hyaluronan-rich extracellular matrix that surrounds oocyte during cumulus oophorus expansion, an indispensable process for proper ovulation. Also inhibits calcium oxalate crystallization. Its function is as follows. Kunitz-type serine protease inhibitor. Has high catalytic efficiency for F10/blood coagulation factor Xa and may act as an anticoagulant by inhibiting prothrombin activation. Inhibits trypsin and mast cell CMA1/chymase and tryptase proteases. The chain is Protein AMBP (Ambp) from Mus musculus (Mouse).